The sequence spans 361 residues: Holliday junction branch migration complex subunit RuvB (361 aa).

Residues 1–25 are disordered; that stretch reads MSIHTDDFGQGGFAQGGFPPDKAPD. The interval 5–207 is large ATPase domain (RuvB-L); that stretch reads TDDFGQGGFA…FGIVARLEFY (203 aa). Residues Leu-46, Arg-47, Gly-88, Lys-91, Thr-92, Thr-93, 154-156, Arg-197, Tyr-207, and Arg-244 each bind ATP; that span reads EDY. A Mg(2+)-binding site is contributed by Thr-92. The small ATPAse domain (RuvB-S) stretch occupies residues 208 to 278; the sequence is TAEELARIVR…LADRALAMLD (71 aa). Residues 281 to 361 are head domain (RuvB-H); the sequence is PQGFDIMDRK…GLPVPGDDAS (81 aa). The DNA site is built by Arg-336 and Arg-341.

It belongs to the RuvB family. In terms of assembly, homohexamer. Forms an RuvA(8)-RuvB(12)-Holliday junction (HJ) complex. HJ DNA is sandwiched between 2 RuvA tetramers; dsDNA enters through RuvA and exits via RuvB. An RuvB hexamer assembles on each DNA strand where it exits the tetramer. Each RuvB hexamer is contacted by two RuvA subunits (via domain III) on 2 adjacent RuvB subunits; this complex drives branch migration. In the full resolvosome a probable DNA-RuvA(4)-RuvB(12)-RuvC(2) complex forms which resolves the HJ.

Its subcellular location is the cytoplasm. It catalyses the reaction ATP + H2O = ADP + phosphate + H(+). In terms of biological role, the RuvA-RuvB-RuvC complex processes Holliday junction (HJ) DNA during genetic recombination and DNA repair, while the RuvA-RuvB complex plays an important role in the rescue of blocked DNA replication forks via replication fork reversal (RFR). RuvA specifically binds to HJ cruciform DNA, conferring on it an open structure. The RuvB hexamer acts as an ATP-dependent pump, pulling dsDNA into and through the RuvAB complex. RuvB forms 2 homohexamers on either side of HJ DNA bound by 1 or 2 RuvA tetramers; 4 subunits per hexamer contact DNA at a time. Coordinated motions by a converter formed by DNA-disengaged RuvB subunits stimulates ATP hydrolysis and nucleotide exchange. Immobilization of the converter enables RuvB to convert the ATP-contained energy into a lever motion, pulling 2 nucleotides of DNA out of the RuvA tetramer per ATP hydrolyzed, thus driving DNA branch migration. The RuvB motors rotate together with the DNA substrate, which together with the progressing nucleotide cycle form the mechanistic basis for DNA recombination by continuous HJ branch migration. Branch migration allows RuvC to scan DNA until it finds its consensus sequence, where it cleaves and resolves cruciform DNA. In Delftia acidovorans (strain DSM 14801 / SPH-1), this protein is Holliday junction branch migration complex subunit RuvB.